Consider the following 107-residue polypeptide: uncharacterized protein (107 aa).

Residues 87–107 (KNRNGPKAEKRRPYVRAHAKW) form a disordered region.

This is an uncharacterized protein from Saccharomyces cerevisiae (strain ATCC 204508 / S288c) (Baker's yeast).